Consider the following 321-residue polypeptide: Lipoyl synthase (321 aa).

Residues cysteine 68, cysteine 73, cysteine 79, cysteine 94, cysteine 98, cysteine 101, and serine 308 each coordinate [4Fe-4S] cluster. Residues 80–297 (FNHGTATFMI…KEIALELGFT (218 aa)) enclose the Radical SAM core domain.

Belongs to the radical SAM superfamily. Lipoyl synthase family. [4Fe-4S] cluster is required as a cofactor.

The protein resides in the cytoplasm. It carries out the reaction [[Fe-S] cluster scaffold protein carrying a second [4Fe-4S](2+) cluster] + N(6)-octanoyl-L-lysyl-[protein] + 2 oxidized [2Fe-2S]-[ferredoxin] + 2 S-adenosyl-L-methionine + 4 H(+) = [[Fe-S] cluster scaffold protein] + N(6)-[(R)-dihydrolipoyl]-L-lysyl-[protein] + 4 Fe(3+) + 2 hydrogen sulfide + 2 5'-deoxyadenosine + 2 L-methionine + 2 reduced [2Fe-2S]-[ferredoxin]. The protein operates within protein modification; protein lipoylation via endogenous pathway; protein N(6)-(lipoyl)lysine from octanoyl-[acyl-carrier-protein]: step 2/2. In terms of biological role, catalyzes the radical-mediated insertion of two sulfur atoms into the C-6 and C-8 positions of the octanoyl moiety bound to the lipoyl domains of lipoate-dependent enzymes, thereby converting the octanoylated domains into lipoylated derivatives. The chain is Lipoyl synthase from Vibrio vulnificus (strain CMCP6).